The following is a 100-amino-acid chain: MVQVQVEFLGGLDVIFSKQRKHQVSVEGANGSVTVGDLIDYIVSNMIQKQKDVSVFLEDNTIRPGILTLINDTDWELEGEKEYVLEDGDIVSFTSTLHGG.

A 1-thioglycine modification is found at glycine 100. Glycine 100 is covalently cross-linked (Glycyl lysine isopeptide (Gly-Lys) (interchain with K-? in acceptor proteins)).

Belongs to the URM1 family. Post-translationally, C-terminal thiocarboxylation occurs in 2 steps, it is first acyl-adenylated (-COAMP) via the hesA/moeB/thiF part of UBA4, then thiocarboxylated (-COSH) via the rhodanese domain of UBA4.

The protein resides in the cytoplasm. It functions in the pathway tRNA modification; 5-methoxycarbonylmethyl-2-thiouridine-tRNA biosynthesis. Its function is as follows. Acts as a sulfur carrier required for 2-thiolation of mcm(5)S(2)U at tRNA wobble positions of cytosolic tRNA(Lys), tRNA(Glu) and tRNA(Gln). Serves as sulfur donor in tRNA 2-thiolation reaction by being thiocarboxylated (-COSH) at its C-terminus by the MOCS3 homolog UBA4. The sulfur is then transferred to tRNA to form 2-thiolation of mcm(5)S(2)U. Prior mcm(5) tRNA modification by the elongator complex is required for 2-thiolation. Also acts as a ubiquitin-like protein (UBL) that is covalently conjugated via an isopeptide bond to lysine residues of target proteins such as AHP1. The thiocarboxylated form serves as substrate for conjugation and oxidative stress specifically induces the formation of UBL-protein conjugates. In Eremothecium gossypii (strain ATCC 10895 / CBS 109.51 / FGSC 9923 / NRRL Y-1056) (Yeast), this protein is Ubiquitin-related modifier 1.